Here is a 579-residue protein sequence, read N- to C-terminus: MNAIVALCHFCELHGPRTLFCTEVLHAPLPQGAGSGDSPDQVEQAEEEEGGIQMSSRVRAHSPAEGASSESSSPGPKKSDMCEGCRSLAVGHPGYISHDKETSIKYVSHQHPNHPQLFSIVRQACVRSLSCEVCPGREGPIFFGDEQHGFVFSHTFFIKDSLARGFQRWYSIIAIMMDRIYLINSWPFLLGRIRGIISELQAKAFKVFEAEQFGCPQRAQRMNTAFTPFLHQRNGNAARSLTSLTSDDNLWACLHTSFAWLLKACGSRLTEKLLEGAPTEDTLVQMEKLADLEEESESWDNSEAEEEEKAPVTPEGAEGRELTSCPTESSFLSACGSWQPPKLTGFKSLRHMRQVLGAPSFRMLAWHVLMGNQVIWKSRDVNLVHSAFEVLRTMLPVGCVRIIPYSSQYEEAYRCNFLGLSPPVPIPAHVLASEFVVVVEVHTATRSNLHPAGCEDDQSLSKYEFVVTSGSPVAADRVGPTILNKIEAALTNQNLSVDVVDQCLICLKEEWMNKVKVLFKFTKVDSRPKEDTQKLLSVLGASEEDNVKLLKFWMTGLSKTYKSHLMSTVRSPTATESRS.

The interval 31–82 (QGAGSGDSPDQVEQAEEEEGGIQMSSRVRAHSPAEGASSESSSPGPKKSDMC) is disordered. Residues Ser62 and Ser73 each carry the phosphoserine modification. The segment covering 63–76 (PAEGASSESSSPGP) has biased composition (low complexity). In terms of domain architecture, uDENN FLCN/SMCR8-type spans 86 to 242 (RSLAVGHPGY…RNGNAARSLT (157 aa)). The stretch at 287 to 310 (EKLADLEEESESWDNSEAEEEEKA) forms a coiled coil. The segment covering 294–308 (EESESWDNSEAEEEE) has biased composition (acidic residues). The disordered stretch occupies residues 294 to 323 (EESESWDNSEAEEEEKAPVTPEGAEGRELT). Residues Ser302, Ser406, Ser537, Ser542, and Ser571 each carry the phosphoserine modification. The cDENN FLCN/SMCR8-type domain maps to 339–491 (QPPKLTGFKS…ILNKIEAALT (153 aa)). In terms of domain architecture, dDENN FLCN/SMCR8-type spans 493–558 (QNLSVDVVDQ…LLKFWMTGLS (66 aa)).

This sequence belongs to the folliculin family. As to quaternary structure, interacts (via C-terminus) with FNIP1 or FNIP2 (via C-terminus). Component of the lysosomal folliculin complex (LFC), composed of FLCN, FNIP1 (or FNIP2), RagA/RRAGA or RagB/RRAGB GDP-bound, RagC/RRAGC or RagD/RRAGD GTP-bound, and Ragulator. Interaction with FNIP1 or FNIP2 mediates indirect interaction with the PRKAA1, PRKAB1 and PRKAG1 subunits of 5'-AMP-activated protein kinase (AMPK). Interacts with HSP90AA1 in the presence of FNIP1. Interacts with HSP70, STUB1, CDC37, AHSA1, CCT2, STIP1, PTGES3 and PPP5C. Interacts with GABARAP; interaction takes place in the presence of FNIP1 and/or FNIP2. Interacts with RILP; the interaction is direct and promotes association between RILP and RAB34. Interacts with KIF3A and KIF3B. Interacts with lactate dehydrogenase LDHA, but not LDHB; the interaction is direct, may preferentially bind LDHA dimers rather than tetramers, and regulates LDHA activity, acting as an uncompetitive inhibitor. Phosphorylation by ULK1 modulates the interaction with GABARAP and is required to regulate autophagy. As to expression, highly expressed in adult heart, pancreas, and prostate with moderate expression in adult brain, kidney, liver, adipose tissue and lung.

Its subcellular location is the lysosome membrane. It localises to the cytoplasm. The protein resides in the cytosol. The protein localises to the cell projection. It is found in the cilium. Its subcellular location is the cytoskeleton. It localises to the microtubule organizing center. The protein resides in the centrosome. The protein localises to the spindle. It is found in the nucleus. GTPase-activating activity is inhibited in the folliculin complex (LFC), which stabilizes the GDP-bound state of RagA/RRAGA (or RagB/RRAGB), because Arg-164 is located far from the RagC/RRAGC or RagD/RRAGD nucleotide pocket. Disassembly of the LFC complex upon amino acid restimulation liberates the GTPase-activating activity. Its function is as follows. Multi-functional protein, involved in both the cellular response to amino acid availability and in the regulation of glycolysis. GTPase-activating protein that plays a key role in the cellular response to amino acid availability through regulation of the non-canonical mTORC1 signaling cascade controlling the MiT/TFE factors TFEB and TFE3. Activates mTORC1 by acting as a GTPase-activating protein: specifically stimulates GTP hydrolysis by RagC/RRAGC or RagD/RRAGD, promoting the conversion to the GDP-bound state of RagC/RRAGC or RagD/RRAGD, and thereby activating the kinase activity of mTORC1. The GTPase-activating activity is inhibited during starvation and activated in presence of nutrients. Acts as a key component for non-canonical mTORC1-dependent control of the MiT/TFE factors TFEB and TFE3, while it is not involved in mTORC1-dependent phosphorylation of canonical RPS6KB1/S6K1 and EIF4EBP1/4E-BP1. In low-amino acid conditions, the lysosomal folliculin complex (LFC) is formed on the membrane of lysosomes, which inhibits the GTPase-activating activity of FLCN, inactivates mTORC1 and maximizes nuclear translocation of TFEB and TFE3. Upon amino acid restimulation, RagA/RRAGA (or RagB/RRAGB) nucleotide exchange promotes disassembly of the LFC complex and liberates the GTPase-activating activity of FLCN, leading to activation of mTORC1 and subsequent cytoplasmic retention of TFEB and TFE3. Indirectly acts as a positive regulator of Wnt signaling by promoting mTOR-dependent cytoplasmic retention of MiT/TFE factor TFE3. Required for the exit of hematopoietic stem cell from pluripotency by promoting mTOR-dependent cytoplasmic retention of TFE3, thereby increasing Wnt signaling. Involved in the control of embryonic stem cells differentiation; together with LAMTOR1 it is necessary to recruit and activate RagC/RRAGC and RagD/RRAGD at the lysosomes, and to induce exit of embryonic stem cells from pluripotency via non-canonical, mTOR-independent TFE3 inactivation. Acts as an inhibitor of browning of adipose tissue by regulating mTOR-dependent cytoplasmic retention of TFE3. In response to flow stress, regulates STK11/LKB1 accumulation and mTORC1 activation through primary cilia: may act by recruiting STK11/LKB1 to primary cilia for activation of AMPK resided at basal bodies, causing mTORC1 down-regulation. Together with FNIP1 and/or FNIP2, regulates autophagy: following phosphorylation by ULK1, interacts with GABARAP and promotes autophagy. Required for starvation-induced perinuclear clustering of lysosomes by promoting association of RILP with its effector RAB34. Regulates glycolysis by binding to lactate dehydrogenase LDHA, acting as an uncompetitive inhibitor. This chain is Folliculin, found in Mus musculus (Mouse).